The following is a 68-amino-acid chain: Conotoxin VnMMSK-01 (68 aa).

Positions 1–20 are cleaved as a signal peptide; the sequence is MMSKLGVLLTICLLLFPLTA. A propeptide spanning residues 21–50 is cleaved from the precursor; that stretch reads VPMDGDQPADLPALRTQDFEPERSPWFDPV. 3 cysteine pairs are disulfide-bonded: cysteine 53–cysteine 65, cysteine 54–cysteine 61, and cysteine 58–cysteine 64. Proline 63 carries the 4-hydroxyproline modification.

The protein belongs to the conotoxin M superfamily. As to expression, expressed by the venom duct.

Its subcellular location is the secreted. The polypeptide is Conotoxin VnMMSK-01 (Conus ventricosus (Mediterranean cone)).